Reading from the N-terminus, the 140-residue chain is Ribonuclease P protein component (140 aa).

The disordered stretch occupies residues 33 to 54 (RALKPSSAKKSSLDTAAKTQPA).

Belongs to the RnpA family. Consists of a catalytic RNA component (M1 or rnpB) and a protein subunit.

It catalyses the reaction Endonucleolytic cleavage of RNA, removing 5'-extranucleotides from tRNA precursor.. Functionally, RNaseP catalyzes the removal of the 5'-leader sequence from pre-tRNA to produce the mature 5'-terminus. It can also cleave other RNA substrates such as 4.5S RNA. The protein component plays an auxiliary but essential role in vivo by binding to the 5'-leader sequence and broadening the substrate specificity of the ribozyme. This Trichormus variabilis (strain ATCC 29413 / PCC 7937) (Anabaena variabilis) protein is Ribonuclease P protein component.